A 214-amino-acid chain; its full sequence is Single-pass membrane and coiled-coil domain-containing protein 1 (214 aa).

Residues 6–42 (TTLISLKEAMKRVDHKLQALETQFKELDFTKDNLMQK) adopt a coiled-coil conformation. Residues 65 to 81 (ALQLTSMELNILYSYVI) form a helical membrane-spanning segment.

It localises to the membrane. This Homo sapiens (Human) protein is Single-pass membrane and coiled-coil domain-containing protein 1 (SMCO1).